Reading from the N-terminus, the 338-residue chain is POU domain, class 4, transcription factor 3 (338 aa).

Positions 56–65 (RAEALAAVDI) match the POU-IV box motif. The 78-residue stretch at 179-256 (DVESDPRELE…VLQAWLEEAE (78 aa)) folds into the POU-specific domain. A DNA-binding region (homeobox) is located at residues 274-333 (RKRKRTSIAAPEKRSLEAYFAIQPRPSSEKIAAIAEKLDLKKNVVRVWFCNQRQKQKRMK).

The protein belongs to the POU transcription factor family. Class-4 subfamily. As to quaternary structure, interacts with ISL1. As to expression, brain.

The protein resides in the nucleus. The protein localises to the cytoplasm. Acts as a transcriptional activator. Acts by binding to sequences related to the consensus octamer motif 5'-ATGCAAAT-3' in the regulatory regions of its target genes. Involved in the auditory system development, required for terminal differentiation of hair cells in the inner ear. This chain is POU domain, class 4, transcription factor 3, found in Mus musculus (Mouse).